We begin with the raw amino-acid sequence, 1218 residues long: MKSKLKLKRYLLFLPLLPLGTLSLANTYLLQDHNTLTPYTPFTTPLNGGLDVVRAAHLHPSYELVDWKRVGDTKLVALVRSALVRVKFQDTTSSDQSNTNQNALSFDTQESQKALNGSQSGSSDTSGSNSQDFASYVLIFKAAPRATWVFERKIKLALPYVKQESQGSGDQGSNGKGSLYKTLQDLLVEQPVTPYTPNAGLARVNGVAQDTVHFGSGQESSWNSQRSQKGLKNNPGPKAVTGFKLDKGRAYRKLNESWPVYEPLDSTKEGKGKDESSWKNSEKTTAENDAPLVGMVGSGAAGSASSLQGNGSNSSGLKSLLRSAPVSVPPSSTSNQTLSLSNPAPVGPQAVVSQPAGGATAAVSVNRTASDTATFSKYLNTAQALHQMGVIVPGLEKWGGNNGTGVVASRQDATSTNLPHAAGASQTGLGTGSPREPALTATSQRAVTVVAGPLRAGNSSETDALPNVITQLYHTSTAQLAYLNGQIVVMGSDRVPSLWYWVVGEDQESGKATWWAKTELNWGTDKQKQFVENQLGFKDDSNSDSKNSNLKAQGLTQPAYLIAGLDVVADHLVFAAFKAGAVGYDMTTDSSASTYNQALAWSTTAGLDSDGGYKALVENTAGLNGPINGLFTLLDTFAYVTPVSGMKGGSQNNEEVQTTYPVKSDQKATAKIASLINASPLNSYGDDGVTVFDALGLNFNFKLNEERLPSRTDQLLVYGIVNESELKSARENAQSTSDDNSNTKVKWTNTASHYLPVPYYYSANFPEAGNRRRAEQRNGVKISTLESQATDGFANSLLNFGTGLKAGVDPAPVARGHKPNYSAVLLVRGGVVRLNFNPDTDKLLDSTDKNSEPISFSYTPFGSAESAVDLTTLKDVTYIAESGLWFYTFDNGEKPTYDGKQQQVKNRKGYAVITVSRTGIEFNEDANTTTLSQAPAALAVQNGIASSQDDLTGILPLSDEFSAVITKDQTWTGKVDIYKNTNGLFEKDDQLSENVKRRDNGLVPIYNEGIVDIWGRVDFAANSVLQARNLTDKTVDEVINNPDILQSFFKFTPAFDNQRAMLVGEKTSDTTLTVKPKIEYLDGNFYGEDSKIAGIPLNIDFPSRIFAGFAALPSWVIPVSVGSSVGILLILLILGLGIGIPMYKVRKLQDSSFVDVFKKVDTLTTAVGSVYKKIITQTSVIKKAPSALKAANNAAPKAPVKPAAPTAPRPPVQPPKKA.

Residues 1 to 25 (MKSKLKLKRYLLFLPLLPLGTLSLA) form the signal peptide. Disordered stretches follow at residues 109 to 129 (QESQ…SGSN), 213 to 245 (HFGS…GFKL), 262 to 353 (EPLD…AVVS), and 411 to 440 (QDAT…PALT). Residues 116 to 129 (NGSQSGSSDTSGSN) are compositionally biased toward low complexity. The span at 217–231 (GQESSWNSQRSQKGL) shows a compositional bias: polar residues. The span at 265-286 (DSTKEGKGKDESSWKNSEKTTA) shows a compositional bias: basic and acidic residues. Residues 301–342 (AGSASSLQGNGSNSSGLKSLLRSAPVSVPPSSTSNQTLSLSN) are compositionally biased toward low complexity. Polar residues predominate over residues 411 to 428 (QDATSTNLPHAAGASQTG). The chain crosses the membrane as a helical span at residues 1121-1141 (VGSSVGILLILLILGLGIGIP). Positions 1192 to 1204 (NNAAPKAPVKPAA) are enriched in low complexity. The disordered stretch occupies residues 1192–1218 (NNAAPKAPVKPAAPTAPRPPVQPPKKA). The segment covering 1205–1218 (PTAPRPPVQPPKKA) has biased composition (pro residues).

It is found in the cell membrane. The sequence is that of Mgp-operon protein 3 from Mycoplasma pneumoniae (strain ATCC 29342 / M129 / Subtype 1) (Mycoplasmoides pneumoniae).